The primary structure comprises 316 residues: Ribosomal RNA small subunit methyltransferase H (316 aa).

S-adenosyl-L-methionine is bound by residues 42 to 44 (GGH), D62, F86, D104, and Q111.

Belongs to the methyltransferase superfamily. RsmH family.

It localises to the cytoplasm. It catalyses the reaction cytidine(1402) in 16S rRNA + S-adenosyl-L-methionine = N(4)-methylcytidine(1402) in 16S rRNA + S-adenosyl-L-homocysteine + H(+). Specifically methylates the N4 position of cytidine in position 1402 (C1402) of 16S rRNA. The polypeptide is Ribosomal RNA small subunit methyltransferase H (Polynucleobacter necessarius subsp. necessarius (strain STIR1)).